A 291-amino-acid polypeptide reads, in one-letter code: 4-hydroxy-tetrahydrodipicolinate synthase (291 aa).

Thr-45 lines the pyruvate pocket. Tyr-131 serves as the catalytic Proton donor/acceptor. Lys-159 (schiff-base intermediate with substrate) is an active-site residue. Ile-202 provides a ligand contact to pyruvate.

The protein belongs to the DapA family. Homotetramer; dimer of dimers.

The protein resides in the cytoplasm. It carries out the reaction L-aspartate 4-semialdehyde + pyruvate = (2S,4S)-4-hydroxy-2,3,4,5-tetrahydrodipicolinate + H2O + H(+). It functions in the pathway amino-acid biosynthesis; L-lysine biosynthesis via DAP pathway; (S)-tetrahydrodipicolinate from L-aspartate: step 3/4. Catalyzes the condensation of (S)-aspartate-beta-semialdehyde [(S)-ASA] and pyruvate to 4-hydroxy-tetrahydrodipicolinate (HTPA). The sequence is that of 4-hydroxy-tetrahydrodipicolinate synthase from Methanosarcina barkeri (strain Fusaro / DSM 804).